The following is a 489-amino-acid chain: CDK5RAP3 protein homolog (489 aa).

The protein belongs to the CDK5RAP3 family.

In terms of biological role, substrate adapter of E3 ligase complexes mediating ufmylation, the covalent attachment of the ubiquitin-like modifier UFM1 to substrate proteins, and which is involved in various processes, such as ribosome recycling and reticulophagy (also called ER-phagy). This is CDK5RAP3 protein homolog from Caenorhabditis elegans.